The following is a 285-amino-acid chain: tRNA (adenine(58)-N(1))-methyltransferase catalytic subunit TRMT61A (285 aa).

Residue serine 2 is modified to N-acetylserine. 5 substrate regions span residues 20–22 (LGH), 35–42 (QTQTRHGV), 64–65 (GW), 85–89 (QILYS), and 110–117 (SGTGSGSV). S-adenosyl-L-methionine is bound by residues leucine 87, 114-116 (SGS), glutamate 135, arginine 140, 163-164 (DV), and aspartate 181. 2 substrate regions span residues 180 to 183 (LDIP) and 205 to 212 (SFSPCIEQ). Substrate is bound at residue threonine 274.

Belongs to the class I-like SAM-binding methyltransferase superfamily. TRM61 family. As to quaternary structure, heterotetramer; composed of two copies of TRMT6 and two copies of TRMT61A.

It is found in the nucleus. It carries out the reaction adenosine(58) in tRNA + S-adenosyl-L-methionine = N(1)-methyladenosine(58) in tRNA + S-adenosyl-L-homocysteine + H(+). The catalysed reaction is an adenosine in mRNA + S-adenosyl-L-methionine = an N(1)-methyladenosine in mRNA + S-adenosyl-L-homocysteine + H(+). In terms of biological role, catalytic subunit of tRNA (adenine-N(1)-)-methyltransferase, which catalyzes the formation of N(1)-methyladenine at position 58 (m1A58) in initiator methionyl-tRNA. Catalytic subunit of mRNA N(1)-methyltransferase complex, which mediates methylation of adenosine residues at the N(1) position of a small subset of mRNAs: N(1) methylation takes place in tRNA T-loop-like structures of mRNAs and is only present at low stoichiometries. This chain is tRNA (adenine(58)-N(1))-methyltransferase catalytic subunit TRMT61A (TRMT61A), found in Bos taurus (Bovine).